Here is a 159-residue protein sequence, read N- to C-terminus: NADH-quinone oxidoreductase subunit B (159 aa).

The [4Fe-4S] cluster site is built by Cys-32, Cys-33, Cys-97, and Cys-126.

This sequence belongs to the complex I 20 kDa subunit family. NDH-1 is composed of 14 different subunits. Subunits NuoB, C, D, E, F, and G constitute the peripheral sector of the complex. Requires [4Fe-4S] cluster as cofactor.

Its subcellular location is the cell inner membrane. It carries out the reaction a quinone + NADH + 5 H(+)(in) = a quinol + NAD(+) + 4 H(+)(out). Its function is as follows. NDH-1 shuttles electrons from NADH, via FMN and iron-sulfur (Fe-S) centers, to quinones in the respiratory chain. The immediate electron acceptor for the enzyme in this species is believed to be ubiquinone. Couples the redox reaction to proton translocation (for every two electrons transferred, four hydrogen ions are translocated across the cytoplasmic membrane), and thus conserves the redox energy in a proton gradient. The sequence is that of NADH-quinone oxidoreductase subunit B from Helicobacter pylori (strain HPAG1).